Consider the following 145-residue polypeptide: UPF0201 protein SSO1042 (145 aa).

Belongs to the UPF0201 family.

This chain is UPF0201 protein SSO1042, found in Saccharolobus solfataricus (strain ATCC 35092 / DSM 1617 / JCM 11322 / P2) (Sulfolobus solfataricus).